The chain runs to 627 residues: Membrane protein insertase YidC (627 aa).

The next 6 membrane-spanning stretches (helical) occupy residues Lys3–Asn23, Trp376–Tyr396, Leu450–Ile470, Phe502–Ile522, Glu534–Phe554, and Ala558–Ser578.

The protein belongs to the OXA1/ALB3/YidC family. Type 1 subfamily. As to quaternary structure, interacts with the Sec translocase complex via SecD. Specifically interacts with transmembrane segments of nascent integral membrane proteins during membrane integration.

It localises to the cell inner membrane. Required for the insertion and/or proper folding and/or complex formation of integral membrane proteins into the membrane. Involved in integration of membrane proteins that insert both dependently and independently of the Sec translocase complex, as well as at least some lipoproteins. Aids folding of multispanning membrane proteins. This chain is Membrane protein insertase YidC, found in Porphyromonas gingivalis (strain ATCC 33277 / DSM 20709 / CIP 103683 / JCM 12257 / NCTC 11834 / 2561).